The sequence spans 431 residues: Gamma-glutamyl phosphate reductase (431 aa).

Belongs to the gamma-glutamyl phosphate reductase family.

It localises to the cytoplasm. It carries out the reaction L-glutamate 5-semialdehyde + phosphate + NADP(+) = L-glutamyl 5-phosphate + NADPH + H(+). The protein operates within amino-acid biosynthesis; L-proline biosynthesis; L-glutamate 5-semialdehyde from L-glutamate: step 2/2. Functionally, catalyzes the NADPH-dependent reduction of L-glutamate 5-phosphate into L-glutamate 5-semialdehyde and phosphate. The product spontaneously undergoes cyclization to form 1-pyrroline-5-carboxylate. The sequence is that of Gamma-glutamyl phosphate reductase from Methylobacterium nodulans (strain LMG 21967 / CNCM I-2342 / ORS 2060).